A 104-amino-acid chain; its full sequence is Large ribosomal subunit protein uL24 (104 aa).

The protein belongs to the universal ribosomal protein uL24 family. Part of the 50S ribosomal subunit.

One of two assembly initiator proteins, it binds directly to the 5'-end of the 23S rRNA, where it nucleates assembly of the 50S subunit. Its function is as follows. One of the proteins that surrounds the polypeptide exit tunnel on the outside of the subunit. In Corynebacterium diphtheriae (strain ATCC 700971 / NCTC 13129 / Biotype gravis), this protein is Large ribosomal subunit protein uL24.